Consider the following 307-residue polypeptide: tRNA dimethylallyltransferase (307 aa).

Position 9–16 (9–16) interacts with ATP; the sequence is GATGTGKS. Residue 11–16 participates in substrate binding; that stretch reads TGTGKS.

Belongs to the IPP transferase family. In terms of assembly, monomer. Requires Mg(2+) as cofactor.

The enzyme catalyses adenosine(37) in tRNA + dimethylallyl diphosphate = N(6)-dimethylallyladenosine(37) in tRNA + diphosphate. In terms of biological role, catalyzes the transfer of a dimethylallyl group onto the adenine at position 37 in tRNAs that read codons beginning with uridine, leading to the formation of N6-(dimethylallyl)adenosine (i(6)A). The polypeptide is tRNA dimethylallyltransferase (Clavibacter sepedonicus (Clavibacter michiganensis subsp. sepedonicus)).